An 832-amino-acid chain; its full sequence is Translation initiation factor IF-2 (832 aa).

Positions 1-249 (MSDDNDKPRT…GGGSSAPREK (249 aa)) are disordered. A compositionally biased stretch (pro residues) spans 53–71 (TPAPAPEPAPEPAPAPAPA). Positions 89–144 (PQERVARLQREAEEERLKLAEDARKRDDQKAKQNADDEKKRQEENKKAEEEAEKQA) are enriched in basic and acidic residues. Positions 145–156 (AAEAEAAAAAEA) are enriched in low complexity. A compositionally biased stretch (basic and acidic residues) spans 180 to 200 (PEPKRPEKKKEEKKPARGGAK). The region spanning 333 to 503 (PRPPVVTIMG…ELQAELLELK (171 aa)) is the tr-type G domain. The segment at 342–349 (GHVDHGKT) is G1. 342–349 (GHVDHGKT) lines the GTP pocket. The segment at 367 to 371 (GITQH) is G2. Residues 389 to 392 (DTPG) are G3. Residues 389 to 393 (DTPGH) and 443 to 446 (NKCD) each bind GTP. The tract at residues 443–446 (NKCD) is G4. The interval 479–481 (SAT) is G5.

It belongs to the TRAFAC class translation factor GTPase superfamily. Classic translation factor GTPase family. IF-2 subfamily.

The protein localises to the cytoplasm. One of the essential components for the initiation of protein synthesis. Protects formylmethionyl-tRNA from spontaneous hydrolysis and promotes its binding to the 30S ribosomal subunits. Also involved in the hydrolysis of GTP during the formation of the 70S ribosomal complex. This is Translation initiation factor IF-2 from Erythrobacter litoralis (strain HTCC2594).